We begin with the raw amino-acid sequence, 504 residues long: ATP synthase subunit alpha (504 aa).

171-178 (GDRQTGKT) is a binding site for ATP.

It belongs to the ATPase alpha/beta chains family. F-type ATPases have 2 components, CF(1) - the catalytic core - and CF(0) - the membrane proton channel. CF(1) has five subunits: alpha(3), beta(3), gamma(1), delta(1), epsilon(1). CF(0) has three main subunits: a(1), b(2) and c(9-12). The alpha and beta chains form an alternating ring which encloses part of the gamma chain. CF(1) is attached to CF(0) by a central stalk formed by the gamma and epsilon chains, while a peripheral stalk is formed by the delta and b chains.

The protein resides in the cell inner membrane. It catalyses the reaction ATP + H2O + 4 H(+)(in) = ADP + phosphate + 5 H(+)(out). In terms of biological role, produces ATP from ADP in the presence of a proton gradient across the membrane. The alpha chain is a regulatory subunit. This Sulfurovum sp. (strain NBC37-1) protein is ATP synthase subunit alpha.